Consider the following 420-residue polypeptide: UDP-glucuronic acid decarboxylase 1 (420 aa).

Methionine 1 carries the post-translational modification N-acetylmethionine. The Cytoplasmic portion of the chain corresponds to 1-19; it reads MVSKGLLRLVSSVNRRKMK. A helical; Signal-anchor for type II membrane protein membrane pass occupies residues 20–40; sequence LLLGIALFAYAASVWGNFVNM. The Lumenal portion of the chain corresponds to 41–420; the sequence is RSIQENGELK…RVKKGRTRHS (380 aa). Position 94 is a phosphothreonine (threonine 94). The NAD(+) site is built by glycine 98, phenylalanine 99, valine 100, aspartate 119, asparagine 120, phenylalanine 122, threonine 123, glycine 124, aspartate 144, and valine 145. Positions 149 and 150 each coordinate UDP-alpha-D-glucuronate. NAD(+) is bound by residues leucine 159 and serine 161. UDP-alpha-D-glucuronate is bound at residue lysine 177. Threonine 178 is an NAD(+) binding site. The UDP-alpha-D-glucuronate site is built by asparagine 185, glycine 188, lysine 191, and arginine 192. The NAD(+) site is built by alanine 200, tyrosine 231, and lysine 235. Tyrosine 231 acts as the Proton acceptor in catalysis. UDP-alpha-D-glucuronate-binding residues include tyrosine 245, glutamine 248, and glutamate 249. NAD(+) contacts are provided by threonine 261, histidine 267, and arginine 272. Residue asparagine 316 is glycosylated (N-linked (GlcNAc...) asparagine).

This sequence belongs to the NAD(P)-dependent epimerase/dehydratase family. UDP-glucuronic acid decarboxylase subfamily. In terms of assembly, homodimer and homotetramer. Interacts with AKT1. NAD(+) is required as a cofactor. As to expression, ubiquitous. Detected in heart, brain, spleen, lung, testis, liver, skeletal muscle and kidney.

It localises to the golgi apparatus. The protein resides in the golgi stack membrane. The catalysed reaction is UDP-alpha-D-glucuronate + H(+) = UDP-alpha-D-xylose + CO2. Its pathway is nucleotide-sugar biosynthesis; UDP-alpha-D-xylose biosynthesis; UDP-alpha-D-xylose from UDP-alpha-D-glucuronate: step 1/1. Its function is as follows. Catalyzes the NAD-dependent decarboxylation of UDP-glucuronic acid to UDP-xylose. Necessary for the biosynthesis of the core tetrasaccharide in glycosaminoglycan biosynthesis. The chain is UDP-glucuronic acid decarboxylase 1 from Rattus norvegicus (Rat).